A 568-amino-acid chain; its full sequence is COMPASS component cclA (568 aa).

Positions Met-1–Pro-113 are disordered. Basic and acidic residues-rich tracts occupy residues Lys-68–Lys-77 and Pro-89–Gln-98. Positions Ala-160–Tyr-353 constitute a B30.2/SPRY domain.

This sequence belongs to the cclA family. In terms of assembly, component of the COMPASS complex.

The protein localises to the nucleus. It localises to the chromosome. It is found in the telomere. Functionally, component of the COMPASS (Set1C) complex that specifically mono-, di- and trimethylates histone H3 to form H3K4me1/2/3, which subsequently plays a role in telomere length maintenance and transcription elongation regulation. Controls the production of several secondary metabolites, including colletochlorins, higginsianins and sclerosporide. Plays a key role in mycelial growth, sporulation, spore germination and virulence. This Colletotrichum higginsianum (strain IMI 349063) (Crucifer anthracnose fungus) protein is COMPASS component cclA.